Consider the following 272-residue polypeptide: Endogenous Bornavirus-like nucleoprotein 2 (272 aa).

Positions 48 to 70 are disordered; that stretch reads MSHLRKDSQPSSPGDDAMDRSGL.

May act as an RNA-binding protein. The C-terminal region is highly homologous to the bornavirus nucleocapsid N protein that binds viral RNA and oligomerizes. The viral protein also possesses a nuclear import and a nuclear export signal. These 2 signals seem absent in EBLN-2 supporting an unrelated function in Human. This is Endogenous Bornavirus-like nucleoprotein 2 (EBLN2) from Homo sapiens (Human).